The primary structure comprises 396 residues: 3-amino-4-hydroxybenzoate 2-monooxygenase PtnB3 (396 aa).

FAD contacts are provided by residues Ala-19, 38 to 39 (EQ), and Arg-112. Tyr-217 functions as the Proton acceptor in the catalytic mechanism. An FAD-binding site is contributed by Asp-295.

It belongs to the 6-hydroxynicotinate 3-monooxygenase family. Requires FAD as cofactor.

It carries out the reaction 3-amino-4-hydroxybenzoate + NADPH + O2 + H(+) = 3-amino-2,4-dihydroxybenzoate + NADP(+) + H2O. It functions in the pathway antibiotic biosynthesis. Part of a gene cluster involved in the biosynthesis of thioplatencin (ThioPTN) and platencin (PTN), potent and selective inhibitors of bacterial and mammalian fatty acid synthases. Catalyzes the hydroxylation of 3-amino-4-hydroxybenzoate (3,4-AHBA) to 3-amino-2,4-dihydroxybenzoate (3,2,4-ADHBA). This chain is 3-amino-4-hydroxybenzoate 2-monooxygenase PtnB3, found in Streptomyces platensis.